We begin with the raw amino-acid sequence, 966 residues long: RNA polymerase-associated protein RapA (966 aa).

A Helicase ATP-binding domain is found at 163 to 337 (EVGQRLHPRV…FARLKLLDAD (175 aa)). Position 176 to 183 (176 to 183 (DEVGLGKT)) interacts with ATP. Residues 283-286 (DEAH) carry the DEAH box motif. Residues 488–642 (RVEWLITFLK…ICPMGMALFE (155 aa)) form the Helicase C-terminal domain.

The protein belongs to the SNF2/RAD54 helicase family. RapA subfamily. In terms of assembly, interacts with the RNAP. Has a higher affinity for the core RNAP than for the holoenzyme. Its ATPase activity is stimulated by binding to RNAP.

Functionally, transcription regulator that activates transcription by stimulating RNA polymerase (RNAP) recycling in case of stress conditions such as supercoiled DNA or high salt concentrations. Probably acts by releasing the RNAP, when it is trapped or immobilized on tightly supercoiled DNA. Does not activate transcription on linear DNA. Probably not involved in DNA repair. In Actinobacillus succinogenes (strain ATCC 55618 / DSM 22257 / CCUG 43843 / 130Z), this protein is RNA polymerase-associated protein RapA.